A 473-amino-acid chain; its full sequence is Envelope glycoprotein M (473 aa).

At 1-32 (MGRPAPRGSPDSAPPTKGMTGARTAWWVWCVQ) the chain is on the intravirion side. A helical membrane pass occupies residues 33 to 53 (VATFVVSAVCVTGLLVLASVF). Over 54–90 (RARFPCFYATASSYAGVNSTAEVRGGVAVPLRLDTQS) the chain is Virion surface. The helical transmembrane segment at 91–111 (LVGTYVITAVLLLAVAVYAVV) threads the bilayer. Residues 112–137 (GAVTSRYDRALDAGRRLAAARMAMPH) are Intravirion-facing. A helical transmembrane segment spans residues 138–158 (ATLIAGNVCSWLLQITVLLLA). The Virion surface portion of the chain corresponds to 159–163 (HRISQ). A helical transmembrane segment spans residues 164 to 184 (LAHLVYVLHFACLVYFAAHFC). The Intravirion portion of the chain corresponds to 185 to 216 (TRGVLSGTYLRQVHGLMELAPTHHRVVGPARA). The chain crosses the membrane as a helical span at residues 217–237 (VLTNALLLGVFLCTADAAVSL). Residues 238–250 (NTIAAFNFNFSAP) lie on the Virion surface side of the membrane. The chain crosses the membrane as a helical span at residues 251 to 271 (GMLICLTVLFAILVVSLLLVV). Residues 272 to 280 (EGVLCHYVR) lie on the Intravirion side of the membrane. The helical transmembrane segment at 281-301 (VLVGPHLGAVAATGIVGLACE) threads the bilayer. At 302 to 318 (HYYTNGYYVVETQWPGA) the chain is on the virion surface side. Residues 319 to 339 (QTGVRVALALVAAFALGMAVL) form a helical membrane-spanning segment. Topologically, residues 340 to 473 (RCTRAYLYHR…DPVYSTVRRW (134 aa)) are intravirion. Disordered regions lie at residues 371–399 (KRVR…PEYA) and 440–473 (HPRH…VRRW).

It belongs to the herpesviridae glycoprotein M family. As to quaternary structure, interacts (via N-terminus) with gN (via N-terminus). The gM-gN heterodimer forms the gCII complex.

It is found in the virion membrane. The protein resides in the host Golgi apparatus. The protein localises to the host trans-Golgi network. Its subcellular location is the host endosome membrane. It localises to the host nucleus inner membrane. Envelope glycoprotein important for virion assembly and egress. Plays a role in the correct incorporation of gH-gL into virion membrane. Directs the glycoprotein N (gN) to the host trans-Golgi network. The sequence is that of Envelope glycoprotein M from Human herpesvirus 1 (strain 17) (HHV-1).